A 425-amino-acid chain; its full sequence is Serine--tRNA ligase (425 aa).

Residue 231–233 coordinates L-serine; sequence TAE. Residue 262 to 264 coordinates ATP; it reads RSE. Glu285 serves as a coordination point for L-serine. 349–352 is a binding site for ATP; sequence EISS. An L-serine-binding site is contributed by Ser385.

Belongs to the class-II aminoacyl-tRNA synthetase family. Type-1 seryl-tRNA synthetase subfamily. As to quaternary structure, homodimer. The tRNA molecule binds across the dimer.

The protein localises to the cytoplasm. It catalyses the reaction tRNA(Ser) + L-serine + ATP = L-seryl-tRNA(Ser) + AMP + diphosphate + H(+). The enzyme catalyses tRNA(Sec) + L-serine + ATP = L-seryl-tRNA(Sec) + AMP + diphosphate + H(+). The protein operates within aminoacyl-tRNA biosynthesis; selenocysteinyl-tRNA(Sec) biosynthesis; L-seryl-tRNA(Sec) from L-serine and tRNA(Sec): step 1/1. Its function is as follows. Catalyzes the attachment of serine to tRNA(Ser). Is also able to aminoacylate tRNA(Sec) with serine, to form the misacylated tRNA L-seryl-tRNA(Sec), which will be further converted into selenocysteinyl-tRNA(Sec). In Halalkalibacterium halodurans (strain ATCC BAA-125 / DSM 18197 / FERM 7344 / JCM 9153 / C-125) (Bacillus halodurans), this protein is Serine--tRNA ligase.